We begin with the raw amino-acid sequence, 637 residues long: 3D-(3,5/4)-trihydroxycyclohexane-1,2-dione hydrolase (637 aa).

E65 contacts thiamine diphosphate. Positions 441-521 are thiamine pyrophosphate binding; sequence SLPGDLQRLW…INVLLFDNSG (81 aa). 2 residues coordinate Mg(2+): D492 and N519.

Belongs to the TPP enzyme family. Mg(2+) serves as cofactor. Requires thiamine diphosphate as cofactor.

It catalyses the reaction 3D-3,5/4-trihydroxycyclohexane-1,2-dione + H2O = 5-deoxy-D-glucuronate + H(+). The protein operates within polyol metabolism; myo-inositol degradation into acetyl-CoA; acetyl-CoA from myo-inositol: step 3/7. Functionally, involved in the cleavage of the C1-C2 bond of 3D-(3,5/4)-trihydroxycyclohexane-1,2-dione (THcHDO) to yield 5-deoxy-glucuronate (5DG). This is 3D-(3,5/4)-trihydroxycyclohexane-1,2-dione hydrolase from Halalkalibacterium halodurans (strain ATCC BAA-125 / DSM 18197 / FERM 7344 / JCM 9153 / C-125) (Bacillus halodurans).